Reading from the N-terminus, the 279-residue chain is CDP-paratose synthase (279 aa).

The active-site Proton acceptor is the Y115.

Belongs to the NAD(P)-dependent epimerase/dehydratase family.

The enzyme catalyses CDP-alpha-D-paratose + NADP(+) = CDP-4-dehydro-3,6-dideoxy-alpha-D-glucose + NADPH + H(+). Its pathway is nucleotide-sugar biosynthesis; CDP-3,6-dideoxy-D-mannose biosynthesis; CDP-3,6-dideoxy-D-mannose from CTP and alpha-D-glucose 1-phosphate: step 4/5. Catalyzes synthesis of paratose and tyvelose, unusual 3,6-dideoxyhexose sugars that form part of the O-antigen in the lipopolysaccharides of several enteric bacteria. The sequence is that of CDP-paratose synthase (rfbS) from Salmonella typhi.